A 622-amino-acid polypeptide reads, in one-letter code: 1-deoxy-D-xylulose-5-phosphate synthase (622 aa).

Residues His80 and 121 to 123 (GHS) contribute to the thiamine diphosphate site. A Mg(2+)-binding site is contributed by Asp152. Thiamine diphosphate contacts are provided by residues 153 to 154 (GA), Asn181, Tyr288, and Glu370. Asn181 is a binding site for Mg(2+).

It belongs to the transketolase family. DXPS subfamily. As to quaternary structure, homodimer. It depends on Mg(2+) as a cofactor. Thiamine diphosphate serves as cofactor.

It carries out the reaction D-glyceraldehyde 3-phosphate + pyruvate + H(+) = 1-deoxy-D-xylulose 5-phosphate + CO2. It functions in the pathway metabolic intermediate biosynthesis; 1-deoxy-D-xylulose 5-phosphate biosynthesis; 1-deoxy-D-xylulose 5-phosphate from D-glyceraldehyde 3-phosphate and pyruvate: step 1/1. Catalyzes the acyloin condensation reaction between C atoms 2 and 3 of pyruvate and glyceraldehyde 3-phosphate to yield 1-deoxy-D-xylulose-5-phosphate (DXP). The polypeptide is 1-deoxy-D-xylulose-5-phosphate synthase (Shewanella sp. (strain MR-4)).